We begin with the raw amino-acid sequence, 353 residues long: Methylthioribose-1-phosphate isomerase (353 aa).

Residues 51–53, Arg-94, and Gln-199 contribute to the substrate site; that span reads RGA. Residue Asp-240 is the Proton donor of the active site. A substrate-binding site is contributed by 250–251; the sequence is NK.

It belongs to the eIF-2B alpha/beta/delta subunits family. MtnA subfamily. Homodimer.

The catalysed reaction is 5-(methylsulfanyl)-alpha-D-ribose 1-phosphate = 5-(methylsulfanyl)-D-ribulose 1-phosphate. Its pathway is amino-acid biosynthesis; L-methionine biosynthesis via salvage pathway; L-methionine from S-methyl-5-thio-alpha-D-ribose 1-phosphate: step 1/6. Its function is as follows. Catalyzes the interconversion of methylthioribose-1-phosphate (MTR-1-P) into methylthioribulose-1-phosphate (MTRu-1-P). This is Methylthioribose-1-phosphate isomerase from Bacillus velezensis (strain DSM 23117 / BGSC 10A6 / LMG 26770 / FZB42) (Bacillus amyloliquefaciens subsp. plantarum).